A 32-amino-acid polypeptide reads, in one-letter code: Photosystem I reaction center subunit XII (32 aa).

The helical transmembrane segment at 9–31 (VYVALVSALITSFLAVRLGLALY) threads the bilayer.

Belongs to the PsaM family.

The protein localises to the plastid. Its subcellular location is the chloroplast thylakoid membrane. The chain is Photosystem I reaction center subunit XII from Chaetosphaeridium globosum (Charophycean green alga).